Consider the following 1055-residue polypeptide: MTVEQNVLQQSAAQKHQQTFLNQLREITGINDTQILQQALKDSNGNLELAVAFLTAKNAKTPQQEETTYYQTALPGNDRYISVGSQADTNVIDLTGDDKDDLQRAIALSLAESNRAFRETGITDEEQAISRVLEASIAENKACLKRTPTEVWRDSRNPYDRKRQDKAPVGLKNVGNTCWFSAVIQSLFNLLEFRRLVLNYKPPSNAQDLPRNQKEHRNLPFMRELRYLFALLVGTKRKYVDPSRAVEILKDAFKSNDSQQQDVSEFTHKLLDWLEDAFQMKAEEETDEEKPKNPMVELFYGRFLAVGVLEGKKFENTEMFGQYPLQVNGFKDLHECLEAAMIEGEIESLHSENSGKSGQEHWFTELPPVLTFELSRFEFNQALGRPEKIHNKLEFPQVLYLDRYMHRNREITRIKREEIKRLKDYLTVLQQRLERYLSYGSGPKRFPLVDVLQYALEFASSKPVCTSPVDDIDASSPPSGSIPSQTLPSTTEQQGALSSELPSTSPSSVAAISSRSVIHKPFTQSRIPPDLPMHPAPRHITEEELSVLESCLHRWRTEIENDTRDLQESISRIHRTIELMYSDKSMIQVPYRLHAVLVHEGQANAGHYWAYIFDHRESRWMKYNDIAVTKSSWEELVRDSFGGYRNASAYCLMYINDKAQFLIQEEFNKETGQPLVGIETLPPDLRDFVEEDNQRFEKELEEWDAQLAQKALQEKLLASQKLRESETSVTTAQAAGDPEYLEQPSRSDFSKHLKEETIQIITKASHEHEDKSPETVLQSAIKLEYARLVKLAQEDTPPETDYRLHHVVVYFIQNQAPKKIIEKTLLEQFGDRNLSFDERCHNIMKVAQAKLEMIKPEEVNLEEYEEWHQDYRKFRETTMYLIIGLENFQRESYIDSLLFLICAYQNNKELLSKGLYRGHDEELISHYRRECLLKLNEQAAELFESGEDREVNNGLIIMNEFIVPFLPLLLVDEMEEKDILAVEDMRNRWCSYLGQEMEPHLQEKLTDFLPKLLDCSMEIKSFHEPPKLPSYSTHELCERFARIMLSLSRTPADGR.

Positions 14–57 (QKHQQTFLNQLREITGINDTQILQQALKDSNGNLELAVAFLTAK) constitute a UBA-like domain. An SUMO interaction domain (SIM) region spans residues 77-102 (NDRYISVGSQADTNVIDLTGDDKDDL). The residue at position 85 (S85) is a Phosphoserine. A Required for SUMO paralog-specific binding motif is present at residues 89-95 (TNVIDLT). UIM domains lie at 97–116 (DDKD…SNRA) and 123–140 (TDEE…IAEN). A Glycyl lysine isopeptide (Lys-Gly) (interchain with G-Cter in SUMO); alternate cross-link involves residue K99. A Glycyl lysine isopeptide (Lys-Gly) (interchain with G-Cter in ubiquitin); alternate cross-link involves residue K99. Positions 169-657 (VGLKNVGNTC…SAYCLMYIND (489 aa)) constitute a USP domain. C178 is an active-site residue. A disordered region spans residues 464–507 (VCTSPVDDIDASSPPSGSIPSQTLPSTTEQQGALSSELPSTSPS). Positions 476-496 (SPPSGSIPSQTLPSTTEQQGA) are enriched in polar residues. Residues 497–507 (LSSELPSTSPS) are compositionally biased toward low complexity. A coiled-coil region spans residues 541 to 578 (TEEELSVLESCLHRWRTEIENDTRDLQESISRIHRTIE). Residues H599 and H607 contribute to the active site. The stretch at 684-717 (DLRDFVEEDNQRFEKELEEWDAQLAQKALQEKLL) forms a coiled coil. Positions 727–749 (TSVTTAQAAGDPEYLEQPSRSDF) are disordered. Position 740 is a phosphotyrosine (Y740).

It belongs to the peptidase C19 family. As to quaternary structure, homotetramer, inhibited form. Homodimer, active form. Interacts with ACTA1 (via its C-terminus); the interaction occurs for all isoforms but is strongest for isoform USP25m in muscle differentiating cells. Interacts (isoform USP25m only) with MYBPC1; the interaction prevents proteasomal degradation of MYBPC1. Interacts (isoform USP25m only) with FLNC (via filament repeats 17-18, 20-21 and 24). Interacts with GAPDH. Interacts with SUMO3; the interaction sumoylates efficiently USP25. Interacts with SUMO2; the interaction sumoylates efficiently USP25. Interacts with SUMO1; the interaction only weakly sumoylates USP25. Interacts with SYK; phosphorylates USP25 and regulates USP25 intracellular levels. In terms of processing, acetylated. Post-translationally, sumoylation impairs binding to and hydrolysis of ubiquitin chains. Sumoylated preferentially with SUMO2 or SUMO3. Desumoylated by SENP1. Polyubiquitinated by SMURF1 by promoting the 'Lys-48'-linkage leading to proteasomal degradation. Preferentially monoubiquitinated but can also be polyubiquitinated. Autodeubiquitinated. Ubiquitination activates the enzymatic activity either by preventing sumoylation or by allowing novel interactions. In terms of processing, phosphorylation in the C-terminal by SYK regulates USP25 cellular levels. As to expression, isoform USP25a is found in most adult and fetal tissues; expression is moderately high in testis, pancreas, kidney, skeletal muscle, liver, lung, placenta, heart, but very low in peripheral blood, colon, small intestine, ovary, prostate, thymus and spleen. Expressed in the brain, with high levels in the cerebral cortex. Isoform USP25b is found in all tissues except heart and skeletal muscle. Isoform USP25m is heart and skeletal muscle specific.

The protein resides in the cytoplasm. It is found in the nucleus. It carries out the reaction Thiol-dependent hydrolysis of ester, thioester, amide, peptide and isopeptide bonds formed by the C-terminal Gly of ubiquitin (a 76-residue protein attached to proteins as an intracellular targeting signal).. Functionally, deubiquitinating enzyme that hydrolyzes ubiquitin moieties conjugated to substrates and thus, functions in various biological processes including inflammation and immune response. Modulates the Wnt/beta-catenin pathway by deubiquitinating and stabilizing tankyrases TNKS1 and TNKS2. Regulates KEAP1-NRF2 axis in the defense against oxidative assaults by deubiquitinating KEAP1 and protecting it from degradation leading to degradation of the NRF2 transcription factor that is responsible for mounting an anti-oxidation gene expression program. Positively regulates RNA virus-induced innate signaling by interacting with and deubiquitinating ERLIN1 and ERLIN2. In turn, restricts virus production by regulating cholesterol biosynthetic flux. Acts as a negative regulator of interleukin-17-mediated signaling and inflammation through the removal of 'Lys-63'-linked ubiquitination of TRAF5 and TRAF6. Prevents the ubiquitination and degradation of TRAF3 to reduce the phosphorylation levels of JNK and P38, the secretion of IL-1B and to induce endotoxin tolerance. The muscle-specific isoform (USP25m) may have a role in the regulation of muscular differentiation and function. This chain is Ubiquitin carboxyl-terminal hydrolase 25 (USP25), found in Homo sapiens (Human).